Reading from the N-terminus, the 440-residue chain is 2-alpha-hydroxytaxane 2-O-benzoyltransferase (440 aa).

Residues H158 and D367 each act as proton acceptor in the active site.

This sequence belongs to the plant acyltransferase family.

It carries out the reaction 10-deacetyl-2-debenzoylbaccatin III + benzoyl-CoA = 10-deacetylbaccatin III + CoA. It functions in the pathway alkaloid biosynthesis; taxol biosynthesis; baccatin III from 10-deacetyl-2-debenzoylbaccatin III: step 1/2. In terms of biological role, catalyzes the conversion of 2-debenzoyl-7,13-diacetylbaccatin III, a semisynthetic substrate, to 7,13-diacetylbaccatin III. This Taxus cuspidata (Japanese yew) protein is 2-alpha-hydroxytaxane 2-O-benzoyltransferase.